The following is a 163-amino-acid chain: Calcium-binding protein 2 (163 aa).

Gly-2 carries N-myristoyl glycine lipidation. EF-hand domains lie at 21-56 (EEIEELQAAFQEFDRDRDGYIGYQELGACMRTLGYM), 72-89 (GKVDFEDFVELMGPKLLA), 95-130 (IGVRELRDAFREFDTNGDGCISLGELRAALKALLGE), and 132-163 (LSQREVDEILRDIDLNGDGLVDFEEFVRMMSR). Positions 34, 36, 38, 40, and 45 each coordinate Ca(2+). The Ca(2+) site is built by Asp-108, Asn-110, Asp-112, Cys-114, Glu-119, Asp-145, Asn-147, Asp-149, and Glu-156.

The protein localises to the cytoplasm. It is found in the perinuclear region. The protein resides in the cell membrane. Its subcellular location is the golgi apparatus. In terms of biological role, required for sound encoding at inner hair cells (IHCs) synapses, likely via inhibition of the inactivation of voltage-gated calcium channel of type 1.3 (Cav1.3) in the IHCs. Required for the normal transfer of light signals through the retina. This is Calcium-binding protein 2 (CABP2) from Bos taurus (Bovine).